A 65-amino-acid chain; its full sequence is Small, acid-soluble spore protein 2 (65 aa).

It belongs to the alpha/beta-type SASP family.

In terms of biological role, SASP are bound to spore DNA. They are double-stranded DNA-binding proteins that cause DNA to change to an a-like conformation. They protect the DNA backbone from chemical and enzymatic cleavage and are thus involved in dormant spore's high resistance to UV light. The protein is Small, acid-soluble spore protein 2 (sasP-2) of Bacillus cereus.